The primary structure comprises 355 residues: Histidinol-phosphate aminotransferase (355 aa).

Lys218 carries the N6-(pyridoxal phosphate)lysine modification.

Belongs to the class-II pyridoxal-phosphate-dependent aminotransferase family. Histidinol-phosphate aminotransferase subfamily. Homodimer. Requires pyridoxal 5'-phosphate as cofactor.

The catalysed reaction is L-histidinol phosphate + 2-oxoglutarate = 3-(imidazol-4-yl)-2-oxopropyl phosphate + L-glutamate. The protein operates within amino-acid biosynthesis; L-histidine biosynthesis; L-histidine from 5-phospho-alpha-D-ribose 1-diphosphate: step 7/9. The polypeptide is Histidinol-phosphate aminotransferase (Pelodictyon phaeoclathratiforme (strain DSM 5477 / BU-1)).